Here is a 567-residue protein sequence, read N- to C-terminus: Malate synthase, glyoxysomal (567 aa).

The active-site Proton acceptor is the arginine 182. Aspartate 468 serves as the catalytic Proton donor. Positions 565–567 (SKL) match the Microbody targeting signal motif.

It belongs to the malate synthase family.

Its subcellular location is the glyoxysome. It catalyses the reaction glyoxylate + acetyl-CoA + H2O = (S)-malate + CoA + H(+). Its pathway is carbohydrate metabolism; glyoxylate cycle; (S)-malate from isocitrate: step 2/2. This is Malate synthase, glyoxysomal from Gossypium hirsutum (Upland cotton).